A 340-amino-acid chain; its full sequence is MKSFLSSCTTGGCGAKIGPGELSKVLSGLPVFQDPQLLVGFDASDDAAVYQINEDTAIVSTVDFFTPMVEDPRIFGRIAAANALSDVYAMGGSPLFALNLVCYPEREDIQDLGEILAGGAEKLQEAGAVLCGGHSIYDREPKYGLAVTGRLNPRQIWKNNTPQPGDRLILTKPLGVGIVMAALRGEMAEAAAVEAALASMQRLNKYAAEKARDFPIHACTDITGFGLLAHTREMAGGSTTIVLYPSALPYIAQAYTYAQGYLLTAAGQRNRNFMEGAVEFGDTPFPLQELMLDPQTSGGLLLSVPGDCAQEALRAIQEAEPQAALIGEVVSRQALPILLR.

Cys13 is a catalytic residue. ATP-binding positions include Lys16 and 43 to 45 (ASD). Asp46 contributes to the Mg(2+) binding site. ATP is bound by residues Asp63, Asp86, and 133 to 135 (GHS). A Mg(2+)-binding site is contributed by Asp86. Mg(2+) is bound at residue Asp221.

The protein belongs to the selenophosphate synthase 1 family. Class I subfamily. In terms of assembly, homodimer. The cofactor is Mg(2+).

The enzyme catalyses hydrogenselenide + ATP + H2O = selenophosphate + AMP + phosphate + 2 H(+). Synthesizes selenophosphate from selenide and ATP. In Desulfitobacterium hafniense (strain Y51), this protein is Selenide, water dikinase.